The following is an 80-amino-acid chain: MATPWSGYLDDVSAKFDTGVDNLQTQVTEALDKLAAKPSDPALLAAYQSKLSEYNLYRNAQSNTVKVFKDIDAAIIQNFR.

The protein belongs to the SctF family. The core secretion machinery of the T3SS is composed of approximately 20 different proteins, including cytoplasmic components, a base, an export apparatus and a needle. This subunit polymerizes and forms the helical needle filament. Interacts with the needle tip protein SipD/SctA. Interacts with the needle adapter protein PrgJ/SctI, the secretin InvG/SctC and the minor export apparatus protein SpaP/SctR. In vitro, the needle protomer refolds spontaneously to extend the needle from the distal end.

It is found in the secreted. The protein localises to the cell surface. With respect to regulation, binding of bile salts, including deoxycholate, to the PrgI:SipD interface may inhibit the T3SS function. In terms of biological role, component of the type III secretion system (T3SS), also called injectisome, which is used to inject bacterial effector proteins into eukaryotic host cells. PrgI/SctF1 forms the external needle filament that protrudes from the bacterial surface. Is probably involved in the transduction of an activating signal, thought to be mediated by the distal tip of the needle filament, to the secretion machine. Required for invasion of epithelial cells. Required for the secretion of the effector protein SptP. Functionally, during infection, can induce innate immune responses. The needle proteins interact with host TLR2 or TLR4, and induce signaling by NF-kappa-B and/or AP-1. This activation is MyD88 dependent and results in increased expression of cytokines, including TNF-alpha, IL-6 and IL-8. In Salmonella typhimurium (strain LT2 / SGSC1412 / ATCC 700720), this protein is SPI-1 type 3 secretion system needle filament protein.